The primary structure comprises 621 residues: MSSTPAQENGTVNGANAAPAPAPAQTTPTPAPATAATPTTAPAASANGTAANAMKPEASSNSSNSASNGTTPAPSTTPTTASNSSAPAAAQDESLVCRWAECNERFTSAEVLYEHICEKHVGRKSTNNLNLTCQWNSCRTTTVKRDHITSHVRVHVPLKPHKCDFCGKCFKRPQDLKKHVKTHADDSVLVGRSPQDQNGGMNGAYRAQAPVHKAPSGFYDHNGHMRGTNQVPFGQPHQNGQASYYHAQYPASQPYHAPMYYPAQTMGGQRNDFTGHQAAPFDARKRQFDDLNDFFGSVKRRQINPTSYESVGRALMPLHAPLGLHSGGLATEYMAQPPHTLGMASAHHPLTQHYYLPPMPNLRTKEDLQQMDHFLEQMQATVYENTAVDMRHHSPTYATRPSIDPYHGASLASPLSATSPHSAGTPAVTPTPSNMSYTSGHSPSTSSTSLSPTSRHSSTPSVSYPTLPSRPGLPYPSTSGLGSNFTHNERRLSGGVLQSARRAADEADRAPTPKASEQATVSSPSEDSETGDVNGPETYDDWLQHMRVIEYLRQGIRARLERQDFDEDDTSRIDPMVLESSDRNQQQRNQQQQQQKSPNEPTAAGPSAPEKPLYPVLPRIN.

Positions Met-1–Gly-14 are enriched in polar residues. Residues Met-1–Pro-87 form a disordered region. Over residues Ala-15 to Pro-87 the composition is skewed to low complexity. 3 consecutive C2H2-type zinc fingers follow at residues Leu-95–His-120, Leu-131–His-155, and His-161–His-183. 2 disordered regions span residues Pro-395–Tyr-539 and Asp-566–Asn-621. Low complexity-rich tracts occupy residues Ala-409–Ala-423 and Ser-436–Pro-465. The YPX[LI] motif 1 signature appears at Tyr-464 to Leu-467. Residues Pro-476–Thr-486 are compositionally biased toward polar residues. A compositionally biased stretch (basic and acidic residues) spans Arg-502–Pro-511. Over residues Ala-515–Ser-525 the composition is skewed to polar residues. A compositionally biased stretch (low complexity) spans Arg-583–Gln-595. The YPX[LI] motif 2 motif lies at Tyr-614 to Leu-617.

It belongs to the pacC/RIM101 family. As to quaternary structure, binds to DNA. Interacts with palA/prr-1, which binds to the two YPX[LI] motifs and is required for proteolytic processing. Activated by C-terminal proteolytic cleavage by signaling protease (probably palB/RIM13) at neutral to alkaline ambient pH.

The protein resides in the cytoplasm. Its subcellular location is the nucleus. In terms of biological role, transcription factor that mediates regulation of both acid- and alkaline-expressed genes in response to ambient pH. At alkaline ambient pH, activates transcription of alkaline-expressed genes (including pacc-1 itself) and represses transcription of acid-expressed genes. The protein is pH-response transcription factor pacc-1 (pacc-1) of Neurospora crassa (strain ATCC 24698 / 74-OR23-1A / CBS 708.71 / DSM 1257 / FGSC 987).